The sequence spans 85 residues: Protein WIR1B (85 aa).

Over 1–12 (MASHSAAGRRPT) the chain is Cytoplasmic. A helical transmembrane segment spans residues 13 to 34 (ALVHIALFVAIAAVIINSSVCL). Residues 35-85 (GAAVHDAATSGTGALDPNVPAVPTPGGAGQPYTGRGCRTVYGCKPPAGSQP) lie on the Extracellular side of the membrane.

Its subcellular location is the membrane. In terms of biological role, associated with pathogen defense. This Triticum aestivum (Wheat) protein is Protein WIR1B (WIR1B).